We begin with the raw amino-acid sequence, 642 residues long: Nocturnin (642 aa).

The interval L50–A87 is disordered. The span at E72–A87 shows a compositional bias: basic and acidic residues. Position 363 (E363) interacts with Mg(2+). Substrate contacts are provided by residues E363, N430, H453–A456, D491–N493, and H600. Residues P611–Q642 form a disordered region.

It belongs to the CCR4/nocturin family. As to quaternary structure, associates to the CCR4-NOT complex composed of at least Pop2/Caf1-55, Ccr4, Not1, Rga/Not2, and Not3. The cofactor is Mg(2+). In terms of tissue distribution, expressed in the head, in the dorsal neurons DN3, a subgroup of clock neurons (at protein level). Ubiquitously expressed in both males and females.

It is found in the cytoplasm. It catalyses the reaction NADP(+) + H2O = phosphate + NAD(+). The catalysed reaction is NADPH + H2O = phosphate + NADH. Its function is as follows. Phosphatase which catalyzes the conversion of NADP(+) to NAD(+) and of NADPH to NADH. Shows a small preference for NADPH over NADP(+). Because of its association with the CCR4-NOT complex, has a role in mRNA deadenylation and decay. Required at the pupal stage for proper wing morphogenesis after eclosion. Functionally, doesn't have a role in light-mediated behavioral response. In dorsal neurons, contributes to the light-mediated behavioral response. This is Nocturnin from Drosophila melanogaster (Fruit fly).